The following is a 169-amino-acid chain: Ribosome maturation factor RimM (169 aa).

Positions Glu-97–Tyr-169 constitute a PRC barrel domain.

Belongs to the RimM family. Binds ribosomal protein uS19.

It is found in the cytoplasm. Its function is as follows. An accessory protein needed during the final step in the assembly of 30S ribosomal subunit, possibly for assembly of the head region. Essential for efficient processing of 16S rRNA. May be needed both before and after RbfA during the maturation of 16S rRNA. It has affinity for free ribosomal 30S subunits but not for 70S ribosomes. The polypeptide is Ribosome maturation factor RimM (Francisella tularensis subsp. holarctica (strain FTNF002-00 / FTA)).